We begin with the raw amino-acid sequence, 268 residues long: Aliphatic sulfonates import ATP-binding protein SsuB 2 (268 aa).

In terms of domain architecture, ABC transporter spans 15–236 (LAVRKLQKTF…VRGSHRLAAL (222 aa)). Residue 47-54 (GRSGCGKS) coordinates ATP.

This sequence belongs to the ABC transporter superfamily. Aliphatic sulfonates importer (TC 3.A.1.17.2) family. The complex is composed of two ATP-binding proteins (SsuB), two transmembrane proteins (SsuC) and a solute-binding protein (SsuA).

The protein localises to the cell inner membrane. The enzyme catalyses ATP + H2O + aliphatic sulfonate-[sulfonate-binding protein]Side 1 = ADP + phosphate + aliphatic sulfonateSide 2 + [sulfonate-binding protein]Side 1.. Functionally, part of the ABC transporter complex SsuABC involved in aliphatic sulfonates import. Responsible for energy coupling to the transport system. In Pseudomonas fluorescens (strain ATCC BAA-477 / NRRL B-23932 / Pf-5), this protein is Aliphatic sulfonates import ATP-binding protein SsuB 2.